Reading from the N-terminus, the 359-residue chain is Membrane-bound lytic murein transglycosylase C (359 aa).

An N-terminal signal peptide occupies residues 1–16 (MKKYLALALIAPLLIS). The N-palmitoyl cysteine moiety is linked to residue Cys-17. Cys-17 carries the S-diacylglycerol cysteine lipid modification.

The protein belongs to the transglycosylase Slt family.

It is found in the cell outer membrane. It carries out the reaction Exolytic cleavage of the (1-&gt;4)-beta-glycosidic linkage between N-acetylmuramic acid (MurNAc) and N-acetylglucosamine (GlcNAc) residues in peptidoglycan, from either the reducing or the non-reducing ends of the peptidoglycan chains, with concomitant formation of a 1,6-anhydrobond in the MurNAc residue.. In terms of biological role, murein-degrading enzyme. May play a role in recycling of muropeptides during cell elongation and/or cell division. The chain is Membrane-bound lytic murein transglycosylase C from Escherichia coli O127:H6 (strain E2348/69 / EPEC).